Here is a 409-residue protein sequence, read N- to C-terminus: 2,3-bisphosphoglycerate-independent phosphoglycerate mutase (409 aa).

The tract at residues 160–179 (ITDADPKHEGNKPKTVKPLD) is disordered.

It belongs to the BPG-independent phosphoglycerate mutase family. A-PGAM subfamily.

It catalyses the reaction (2R)-2-phosphoglycerate = (2R)-3-phosphoglycerate. It functions in the pathway carbohydrate degradation; glycolysis; pyruvate from D-glyceraldehyde 3-phosphate: step 3/5. Catalyzes the interconversion of 2-phosphoglycerate and 3-phosphoglycerate. The sequence is that of 2,3-bisphosphoglycerate-independent phosphoglycerate mutase from Methanosphaera stadtmanae (strain ATCC 43021 / DSM 3091 / JCM 11832 / MCB-3).